We begin with the raw amino-acid sequence, 169 residues long: Myosin regulatory light chain 11 (169 aa).

At Ala-2 the chain carries N,N,N-trimethylalanine. Phosphoserine is present on residues Ser-15 and Ser-16. A phosphothreonine mark is found at Thr-25 and Thr-35. Positions 25-60 (TQIQEFKEAFTVIDQNRDGIIDKEDLRDTFAAMGRL) constitute an EF-hand 1 domain. 4 residues coordinate Ca(2+): Asp-38, Asn-40, Asp-42, and Asp-49. Phosphoserine is present on Ser-75. 2 EF-hand domains span residues 95-130 (DPEDVITGAFKVLDPEGKGTIKKQFLEELLTTQCDR) and 131-166 (FSQEEIKNMWAAFPPDVGGNVDYKNICYVITHGDAK). Residue Thr-101 is modified to Phosphothreonine.

In terms of assembly, myosin is a hexamer of 2 heavy chains and 4 light chains.

Myosin regulatory subunit that plays an essential to maintain muscle integrity during early development. Plays a role in muscle contraction. This Rattus norvegicus (Rat) protein is Myosin regulatory light chain 11 (Myl11).